The primary structure comprises 337 residues: tRNA N6-adenosine threonylcarbamoyltransferase (337 aa).

Residues His111 and His115 each contribute to the Fe cation site. Residues 134–138, Asp167, Gly180, and Asn272 contribute to the substrate site; that span reads LVSGG. Asp300 is a binding site for Fe cation.

It belongs to the KAE1 / TsaD family. Fe(2+) is required as a cofactor.

Its subcellular location is the cytoplasm. It catalyses the reaction L-threonylcarbamoyladenylate + adenosine(37) in tRNA = N(6)-L-threonylcarbamoyladenosine(37) in tRNA + AMP + H(+). In terms of biological role, required for the formation of a threonylcarbamoyl group on adenosine at position 37 (t(6)A37) in tRNAs that read codons beginning with adenine. Is involved in the transfer of the threonylcarbamoyl moiety of threonylcarbamoyl-AMP (TC-AMP) to the N6 group of A37, together with TsaE and TsaB. TsaD likely plays a direct catalytic role in this reaction. This Nitrosomonas europaea (strain ATCC 19718 / CIP 103999 / KCTC 2705 / NBRC 14298) protein is tRNA N6-adenosine threonylcarbamoyltransferase.